A 227-amino-acid polypeptide reads, in one-letter code: Protein MobD (227 aa).

The protein is Protein MobD (mobD) of Acidithiobacillus ferrooxidans (Thiobacillus ferrooxidans).